The sequence spans 305 residues: FMRFamide-related peptides type HF-4 (305 aa).

A signal peptide spans 1–19 (MTSLCLTIAPAVLSLICLS). Residues F36, F47, and F66 each carry the phenylalanine amide modification. I75 is modified (isoleucine amide). Phenylalanine amide occurs at positions 84 and 93. I102 is subject to Isoleucine amide. F111, F120, F129, F138, F147, F156, and F165 each carry phenylalanine amide. A propeptide spanning residues 168-305 (SVDGEIEAGV…EHKQEYMRFG (138 aa)) is cleaved from the precursor.

This sequence belongs to the FARP (FMRFamide related peptide) family. Central nervous system.

It is found in the secreted. In terms of biological role, can function as both cardioregulatory hormones and transmitters and may regulate cardiovascular function. This chain is FMRFamide-related peptides type HF-4, found in Cornu aspersum (Brown garden snail).